The chain runs to 211 residues: Dibenzothiophene metabolism operon protein DoxH (211 aa).

It functions in the pathway aromatic compound metabolism; naphthalene degradation. Its function is as follows. May be involved in the conversion of 2-hydroxy-4-(2'-oxo-3,5-cyclohexadienyl)-buta-2,4-dienoate to cis-O-hydroxybenzylidenepyruvate. DoxH and doxJ encode different enzymes that may have interchangeable functions. This chain is Dibenzothiophene metabolism operon protein DoxH (doxH), found in Pseudomonas sp. (strain C18).